The primary structure comprises 348 residues: uncharacterized protein (348 aa).

This is an uncharacterized protein from Caenorhabditis elegans.